A 430-amino-acid polypeptide reads, in one-letter code: Tol-Pal system protein TolB (430 aa).

The first 21 residues, 1–21 (MKQALRVAFGFLMLWAAVLHA), serve as a signal peptide directing secretion.

The protein belongs to the TolB family. The Tol-Pal system is composed of five core proteins: the inner membrane proteins TolA, TolQ and TolR, the periplasmic protein TolB and the outer membrane protein Pal. They form a network linking the inner and outer membranes and the peptidoglycan layer.

Its subcellular location is the periplasm. In terms of biological role, part of the Tol-Pal system, which plays a role in outer membrane invagination during cell division and is important for maintaining outer membrane integrity. TolB occupies a key intermediary position in the Tol-Pal system because it communicates directly with both membrane-embedded components, Pal in the outer membrane and TolA in the inner membrane. The chain is Tol-Pal system protein TolB from Klebsiella pneumoniae (strain 342).